Here is a 591-residue protein sequence, read N- to C-terminus: Probable translation initiation factor IF-2 (591 aa).

The 217-residue stretch at 7-223 folds into the tr-type G domain; the sequence is LRTPIVCVMG…LLGLAQKFLE (217 aa). Positions 16-23 are G1; sequence GHVDHGKT. 16–23 is a binding site for GTP; that stretch reads GHVDHGKT. The segment at 41–45 is G2; sequence AITQH. Positions 78 to 81 are G3; the sequence is DTPG. GTP contacts are provided by residues 78–82 and 132–135; these read DTPGH and NKID. The segment at 132–135 is G4; that stretch reads NKID. A G5 region spans residues 200-202; the sequence is SAF.

This sequence belongs to the TRAFAC class translation factor GTPase superfamily. Classic translation factor GTPase family. IF-2 subfamily.

In terms of biological role, function in general translation initiation by promoting the binding of the formylmethionine-tRNA to ribosomes. Seems to function along with eIF-2. The polypeptide is Probable translation initiation factor IF-2 (Methanosarcina mazei (strain ATCC BAA-159 / DSM 3647 / Goe1 / Go1 / JCM 11833 / OCM 88) (Methanosarcina frisia)).